Consider the following 154-residue polypeptide: Endoribonuclease YbeY (154 aa).

Residues H113, H117, and H123 each coordinate Zn(2+).

This sequence belongs to the endoribonuclease YbeY family. Zn(2+) serves as cofactor.

It is found in the cytoplasm. Single strand-specific metallo-endoribonuclease involved in late-stage 70S ribosome quality control and in maturation of the 3' terminus of the 16S rRNA. This is Endoribonuclease YbeY from Vibrio vulnificus (strain CMCP6).